A 1320-amino-acid polypeptide reads, in one-letter code: MDVFSFVKIPKLSSHRTKSSGWPPPSGTWGLNQVPPYGWEMMTNRDGRDYFINHMTQAIPFDDPRFDSCQIIPPAPRKVEMRRDPVLGFGFVAGSEKPVVVRSVTPGGPSEGKLIPGDQIVMINDEAVSAAPRERVIDLVRSCKESILLTVIQPYPSPKSAFISAAKKARLKSNPVKVRFSEEVIINGQVSETVKDNSLLFMPNVLKVYLENGQTKSFRFDCSTSIKDVILTLQEKLSIKGIEHFSLMLEQRIEGAGTKLLLLHEQETLTQVTQRPSSHKMRCLFRISFVPKDPIDLLRRDPVAFEYLYVQSCNDVVQERFGPELKYDIALRLAALQMYIATVTTKQTQKISLKYIEKEWGLETFLPSAVLQSMKEKNIKKALSHLVKANQNLVPPGKKLSALQAKVHYLKFLSDLRLYGGRVFKATLVQAEKRSEVTLLVGPRYGISHVINTKTNLVALLADFSHVNRIEMFTEEESLVRVELHVLDVKPITLLMESSDAMNLACLTAGYYRLLVDSRRSIFNMANKKNAGTQDTGSENKGKHNLLGPDWNCMPQMTTFIGEGEQEAQITYIDSKQKTVEMTDSTLCPKEHRHLYIDNSYSSDELNQPLTQPGDAPCEADYRSLAQRSLLTLSGPDTLKKAQESPRGAKVSFIFGDLALDDGMSPPTIGYERMLEENPEMLEKQRNLYISSANDMKNLDLTPDTDSIQFVANSVYANIGDVKNFEAPEGIEEPLLHDICYAENTDDAEDEDEVSCEEDLVVGEMNQPAILDLSGSSDDIIDLTTLPPPEGDDNEDDFLLRSLNMAIAAPPPGFRDSSDEEDTQSQATSFHEDKEQGSSLQNEEIPVSLIDAVPTSAEGKCEKGLDPAVVSTLEALEALSEEQQKSENSGVAILRAYSPESSSDSGNETNSSEMTEGSELAAAQKQSESLSRMFLATHEGYHPLAEEQTEFPTSKAPSVGLPPKSSHGLAARPATDLPPKVVPSKQILHSDHMEMEPETMETKSVTDYFSKLHMGSVAYSCTSKRKSKLPEGEGKSPLSGNIPGKKQQGTKIAEIEEDTKGKAGTVSSRDNPHLSTFNLERTAFRKDSQRWYVASDGGVVEKSGMEAPAMKVFPRGPGLGNREAEGKEDGTVEGGADDASVLGQGDRFLTDMACVASAKDLDNPEDTDSPSCDHATKLSEAEDNVARLCDYHLAKRMSSLQSEGHFSLQSSQGSSVDTGCGPGSSSSACATPVESPLCPSMGKHMIPDASGKGGRYISPEERAPGHPNHGATFEELHPQTEGMCPRMTVPALHTAINADPLFGTLRDGCHRLPKIKETTV.

A WW domain is found at Gln-33–Phe-66. The 78-residue stretch at Lys-78 to Tyr-155 folds into the PDZ domain. Positions Asn-204–Arg-519 constitute an FERM domain. Disordered regions lie at residues Ala-809–Val-847, Tyr-897–Ser-927, Thr-949–Val-981, Lys-1024–Thr-1050, Pro-1114–Ala-1139, and Gly-1204–Glu-1274. The span at Glu-900–Glu-913 shows a compositional bias: low complexity. Polar residues predominate over residues Gly-1204 to Asp-1217. Over residues Gly-1223–Pro-1232 the composition is skewed to low complexity.

Interacts (via C-terminus) with DLG1, DLG2, DLG3 and DLG4/PSD95. Interacts (via N-terminus) with ARHGEF7; the interaction is mediated by the PDZ domain. Interacts with GPSM2 (via TPR repeat region). In terms of tissue distribution, expressed in various regions of the brain, including cortex, hippocampus, cerebellum, olfactory bulb and medial habenular nucleus.

It is found in the cell projection. It localises to the dendritic spine. Its function is as follows. Positive regulator of dendritic spine morphogenesis and density. Required for the maintenance of excitatory synaptic transmission. Binds phosphatidylinositol 4,5-bisphosphate. The protein is FERM and PDZ domain-containing protein 4 (Frmpd4) of Mus musculus (Mouse).